We begin with the raw amino-acid sequence, 343 residues long: Small ribosomal subunit biogenesis GTPase RsgA (343 aa).

Residues 116–275 (RGQLKPVAAN…LIDSPGIREF (160 aa)) enclose the CP-type G domain. Residues 163 to 166 (NKFD) and 217 to 225 (GQSGVGKSS) each bind GTP. Zn(2+) contacts are provided by Cys-299, Cys-304, His-306, and Cys-312.

This sequence belongs to the TRAFAC class YlqF/YawG GTPase family. RsgA subfamily. Monomer. Associates with 30S ribosomal subunit, binds 16S rRNA. It depends on Zn(2+) as a cofactor.

It is found in the cytoplasm. Functionally, one of several proteins that assist in the late maturation steps of the functional core of the 30S ribosomal subunit. Helps release RbfA from mature subunits. May play a role in the assembly of ribosomal proteins into the subunit. Circularly permuted GTPase that catalyzes slow GTP hydrolysis, GTPase activity is stimulated by the 30S ribosomal subunit. The polypeptide is Small ribosomal subunit biogenesis GTPase RsgA (Pseudomonas fluorescens (strain SBW25)).